The sequence spans 60 residues: Small, acid-soluble spore protein H (60 aa).

This sequence belongs to the SspH family.

The protein localises to the spore core. In Halalkalibacterium halodurans (strain ATCC BAA-125 / DSM 18197 / FERM 7344 / JCM 9153 / C-125) (Bacillus halodurans), this protein is Small, acid-soluble spore protein H.